Reading from the N-terminus, the 469-residue chain is Pup--protein ligase (469 aa).

Glutamate 9 serves as a coordination point for Mg(2+). Position 53 (arginine 53) interacts with ATP. Tyrosine 55 contributes to the Mg(2+) binding site. Catalysis depends on aspartate 57, which acts as the Proton acceptor. Glutamate 63 lines the Mg(2+) pocket. ATP is bound by residues threonine 66 and tryptophan 430.

It belongs to the Pup ligase/Pup deamidase family. Pup-conjugating enzyme subfamily.

It catalyses the reaction ATP + [prokaryotic ubiquitin-like protein]-L-glutamate + [protein]-L-lysine = ADP + phosphate + N(6)-([prokaryotic ubiquitin-like protein]-gamma-L-glutamyl)-[protein]-L-lysine.. The protein operates within protein degradation; proteasomal Pup-dependent pathway. It functions in the pathway protein modification; protein pupylation. Functionally, catalyzes the covalent attachment of the prokaryotic ubiquitin-like protein modifier Pup to the proteasomal substrate proteins, thereby targeting them for proteasomal degradation. This tagging system is termed pupylation. The ligation reaction involves the side-chain carboxylate of the C-terminal glutamate of Pup and the side-chain amino group of a substrate lysine. In Kocuria rhizophila (strain ATCC 9341 / DSM 348 / NBRC 103217 / DC2201), this protein is Pup--protein ligase.